Consider the following 469-residue polypeptide: UDP-N-acetylmuramate--L-alanine ligase (469 aa).

Residue 119–125 (GTHGKTT) participates in ATP binding.

This sequence belongs to the MurCDEF family.

The protein resides in the cytoplasm. The enzyme catalyses UDP-N-acetyl-alpha-D-muramate + L-alanine + ATP = UDP-N-acetyl-alpha-D-muramoyl-L-alanine + ADP + phosphate + H(+). It functions in the pathway cell wall biogenesis; peptidoglycan biosynthesis. Functionally, cell wall formation. This Vesicomyosocius okutanii subsp. Calyptogena okutanii (strain HA) protein is UDP-N-acetylmuramate--L-alanine ligase.